Consider the following 474-residue polypeptide: Glutamate--tRNA ligase (474 aa).

The 'HIGH' region signature appears at 9 to 19 (PSPTGYLHVGG). The 'KMSKS' region motif lies at 240–244 (KLSKR). K243 serves as a coordination point for ATP.

The protein belongs to the class-I aminoacyl-tRNA synthetase family. Glutamate--tRNA ligase type 1 subfamily. In terms of assembly, monomer.

The protein resides in the cytoplasm. The enzyme catalyses tRNA(Glu) + L-glutamate + ATP = L-glutamyl-tRNA(Glu) + AMP + diphosphate. Catalyzes the attachment of glutamate to tRNA(Glu) in a two-step reaction: glutamate is first activated by ATP to form Glu-AMP and then transferred to the acceptor end of tRNA(Glu). In Aliivibrio fischeri (strain ATCC 700601 / ES114) (Vibrio fischeri), this protein is Glutamate--tRNA ligase.